A 152-amino-acid polypeptide reads, in one-letter code: UPF0266 membrane protein plu2700 (152 aa).

Transmembrane regions (helical) follow at residues 6 to 26, 45 to 65, and 67 to 87; these read IALT…EFVV, IDAL…ITVY, and SRLT…IAYI.

Belongs to the UPF0266 family.

It is found in the cell inner membrane. The polypeptide is UPF0266 membrane protein plu2700 (Photorhabdus laumondii subsp. laumondii (strain DSM 15139 / CIP 105565 / TT01) (Photorhabdus luminescens subsp. laumondii)).